The primary structure comprises 397 residues: Decapping and exoribonuclease protein (397 aa).

Substrate-binding positions include Arg-58, Glu-101, and 131-133 (WRG). Residue Glu-192 participates in Mg(2+) binding. 2 residues coordinate substrate: Cys-217 and Glu-234. 4 residues coordinate Mg(2+): Glu-234, Asp-236, Glu-253, and Leu-254. Substrate is bound by residues Lys-255 and Gln-280. The residue at position 392 (Thr-392) is a Phosphothreonine. Residue Ser-394 is modified to Phosphoserine.

Belongs to the DXO/Dom3Z family. The cofactor is Mg(2+).

The protein resides in the nucleus. It carries out the reaction a 5'-end triphospho-ribonucleoside in mRNA + H2O = a 5'-end phospho-ribonucleoside in mRNA + diphosphate + H(+). It catalyses the reaction a 5'-end NAD(+)-phospho-ribonucleoside in mRNA + H2O = a 5'-end phospho-ribonucleoside in mRNA + NAD(+) + H(+). The catalysed reaction is a 5'-end NAD(+)-phospho-ribonucleoside in snoRNA + H2O = a 5'-end phospho-ribonucleoside in snoRNA + NAD(+) + H(+). The enzyme catalyses a 5'-end (N(7)-methyl 5'-triphosphoguanosine)-ribonucleoside-ribonucleotide in mRNA + H2O = a (N(7)-methyl 5'-triphosphoguanosine)-nucleoside + a 5'-end phospho-ribonucleoside in mRNA + H(+). It carries out the reaction a 5'-end FAD-phospho-ribonucleoside in mRNA + H2O = a 5'-end phospho-ribonucleoside in mRNA + FAD + H(+). It catalyses the reaction a 5'-end CoA-ribonucleoside in mRNA + H2O = 3'-dephospho-CoA + a 5'-end phospho-ribonucleoside in mRNA + H(+). Decapping enzyme for NAD-capped RNAs: specifically hydrolyzes the nicotinamide adenine dinucleotide (NAD) cap from a subset of RNAs by removing the entire NAD moiety from the 5'-end of an NAD-capped RNA. The NAD-cap is present at the 5'-end of some RNAs and snoRNAs. In contrast to the canonical 5'-end N7 methylguanosine (m7G) cap, the NAD cap promotes mRNA decay. Preferentially acts on NAD-capped transcripts in response to environmental stress. Also acts as a non-canonical decapping enzyme that removes the entire cap structure of m7G capped or incompletely capped RNAs and mediates their subsequent degradation. Specifically degrades pre-mRNAs with a defective 5'-end m7G cap and is part of a pre-mRNA capping quality control. Has decapping activity toward incomplete 5'-end m7G cap mRNAs such as unmethylated 5'-end-capped RNA (cap0), while it has no activity toward 2'-O-ribose methylated m7G cap (cap1). In contrast to canonical decapping enzymes DCP2 and NUDT16, which cleave the cap within the triphosphate linkage, the decapping activity releases the entire cap structure GpppN and a 5'-end monophosphate RNA. Also has 5'-3' exoribonuclease activities: The 5'-end monophosphate RNA is then degraded by the 5'-3' exoribonuclease activity, enabling this enzyme to decap and degrade incompletely capped mRNAs. Also possesses RNA 5'-pyrophosphohydrolase activity by hydrolyzing the 5'-end triphosphate to release pyrophosphates. Exhibits decapping activity towards FAD-capped RNAs. Exhibits decapping activity towards dpCoA-capped RNAs in vitro. The sequence is that of Decapping and exoribonuclease protein from Rattus norvegicus (Rat).